The following is a 997-amino-acid chain: MAAIMIGSISVPIIGSAQCATAPIGNRVNIVAPGHMAICKPQMRSHAYYKHASQKLSEQSSRGIEVLNSFFNNDPEDAFRLTRNGMSKVKKGPNGRIILRKPKARHVFERINLEKSEKEQKGKFFNGEYDTTVTSIKGVTTSKENDLGAFSLRSPFYKRTCKKEKRRITRENIVCVDDVNNLCERILKITRDKNIPVEIIGKRRNHHTLTFKKFKGSFVGKVSLAPERSQMKHVEMSYGQFDYILQAICRITSTKHVRDEDIKPGCSGWVFSTDHALTQKYSRLPYLVIRGRDDDGIVNALEPVLFYSDVEHYSFQNEVQFFNGWRKMFDKLKPHSDHTCKVDHNNEECGEMAAVLSQAIFPVLKLSCQVCREKLSRVSFEEFKDFLSRNFMTHESEWSTLRDGVHCDNVLKLIKGAVQTTQNLKLSSDIMKLVQNHTSTHMKQIQDINKALMKGSLVTQDELDLALKQLLEMTQWFKNHMHLTGEEALKTFRNKRSNKAMINPSLLCDNQLDKNGNFIWGERGYHSKRLFKNFFEEVIPSEGYTKYIVRNFPNGTRKLAIGSLIVPLNLDRARTALLGESIEKEPLTSACISQQNENYIHSCCCVTMDDGTPMYSELKSPTKRHLVIGASGDPKYIDLPASEAERMYIAKEGYCYLNIFLAMLVNVNENEAKDFTKMIRDVLIPMLGQWPSLMDVATAAYILGVFHPETRCAELPRILVDHATQTMHVIDSYGSLTVGYHVLKAGTVNHLIQFASNDLQSEMKHYRVGGTPTQRIRLEEQLIKGIFKPKIMMQLLHDDPYILLLGMISPTILVHMYRMRHFERGIEIWIKRDHEIGKIFVILEQLTRKVALAEILVDQLDLISEASPHLLEIMNGCQDNQRAYAPALDLLTIQVEREFSNKELKTNGYPDLHQTLHDMREKNVCEAVTQFMARAKLAGKILCNRAIEAILDFYGKKFDPASKRKKARIFATICSRVLYHDPSTCEEHSRCRRAQTK.

The Peptidase S30 domain occupies 173 to 313 (IVCVDDVNNL…VLFYSDVEHY (141 aa)). Residues glutamate 235 and serine 267 each act as for P1 proteinase activity in the active site. Positions 365-368 (KLSC) match the Involved in interaction with stylet and aphid transmission motif. An Involved in virions binding and aphid transmission motif is present at residues 621–623 (PTK). The 123-residue stretch at 647–769 (MYIAKEGYCY…QSEMKHYRVG (123 aa)) folds into the Peptidase C6 domain. Active-site for helper component proteinase activity residues include cysteine 655 and histidine 728.

Belongs to the potyviridae P3N-PIPO polyprotein family. In terms of assembly, interacts (via PIPO domain) with host PCaP1 protein; this interaction may help to anchor the movement complex to the plasma membrane from which the complex could move to the plasmodesmata. Potyviral RNA is expressed as two polyproteins which undergo post-translational proteolytic processing. Genome polyprotein is processed by NIa-pro, P1 and HC-pro proteinases resulting in the production of at least ten individual proteins. P3N-PIPO is cleaved by P1 and HC-pro proteinases resulting in the production of three individual proteins. The P1 proteinase and the HC-pro cleave only their respective C-termini autocatalytically.

It is found in the host cell junction. The protein resides in the host plasmodesma. It catalyses the reaction Hydrolyzes a Gly-|-Gly bond at its own C-terminus, commonly in the sequence -Tyr-Xaa-Val-Gly-|-Gly, in the processing of the potyviral polyprotein.. Required for aphid transmission and also has proteolytic activity. Only cleaves a Gly-Gly dipeptide at its own C-terminus. Interacts with virions and aphid stylets. Acts as a suppressor of RNA-mediated gene silencing, also known as post-transcriptional gene silencing (PTGS), a mechanism of plant viral defense that limits the accumulation of viral RNAs. May have RNA-binding activity. Its function is as follows. Allows efficient cell to cell propagation, by bypassing the host cell wall barrier. Transports viral genome to neighboring plant cells directly through plasmosdesmata, without any budding. This chain is P3N-PIPO polyprotein, found in Citrullus lanatus (Watermelon).